A 426-amino-acid polypeptide reads, in one-letter code: Glutamate-1-semialdehyde 2,1-aminomutase (426 aa).

At Lys-265 the chain carries N6-(pyridoxal phosphate)lysine.

This sequence belongs to the class-III pyridoxal-phosphate-dependent aminotransferase family. HemL subfamily. In terms of assembly, homodimer. Requires pyridoxal 5'-phosphate as cofactor.

The protein resides in the cytoplasm. The catalysed reaction is (S)-4-amino-5-oxopentanoate = 5-aminolevulinate. It participates in porphyrin-containing compound metabolism; protoporphyrin-IX biosynthesis; 5-aminolevulinate from L-glutamyl-tRNA(Glu): step 2/2. The chain is Glutamate-1-semialdehyde 2,1-aminomutase from Actinobacillus pleuropneumoniae serotype 3 (strain JL03).